The chain runs to 811 residues: Vacuolar protein sorting-associated protein 70 (811 aa).

The segment covering 1–21 has biased composition (basic and acidic residues); sequence MRMIQRERKREKEEGQLKERT. The tract at residues 1–63 is disordered; sequence MRMIQRERKR…MNDSFTLTSR (63 aa). N-linked (GlcNAc...) asparagine glycosylation occurs at N55. The chain crosses the membrane as a helical span at residues 90–110; that stretch reads FMYLILASLLLYMGFVAAFAP. Residue N237 is glycosylated (N-linked (GlcNAc...) asparagine). Positions 334–367 are disordered; that stretch reads FSDTPGDPTTPGYPSKDSDTEHMSPVGRVPRIPS. A compositionally biased stretch (low complexity) spans 336–345; it reads DTPGDPTTPG. Zn(2+) is bound by residues H445, D456, and D522. Residues N568 and N599 are each glycosylated (N-linked (GlcNAc...) asparagine). H607 lines the Zn(2+) pocket. N-linked (GlcNAc...) asparagine glycosylation occurs at N670.

Belongs to the peptidase M28 family. M28B subfamily. It depends on Zn(2+) as a cofactor.

The protein localises to the membrane. Involved in vacuolar protein sorting. The sequence is that of Vacuolar protein sorting-associated protein 70 (VPS70) from Saccharomyces cerevisiae (strain ATCC 204508 / S288c) (Baker's yeast).